The chain runs to 152 residues: Large ribosomal subunit protein uL22 (152 aa).

Belongs to the universal ribosomal protein uL22 family. In terms of assembly, part of the 50S ribosomal subunit.

In terms of biological role, this protein binds specifically to 23S rRNA. It makes multiple contacts with different domains of the 23S rRNA in the assembled 50S subunit and ribosome. Functionally, the globular domain of the protein is located near the polypeptide exit tunnel on the outside of the subunit, while an extended beta-hairpin is found that lines the wall of the exit tunnel in the center of the 70S ribosome. This chain is Large ribosomal subunit protein uL22, found in Methanothrix thermoacetophila (strain DSM 6194 / JCM 14653 / NBRC 101360 / PT) (Methanosaeta thermophila).